The following is a 351-amino-acid chain: Cardiolipin synthase (CMP-forming) (351 aa).

The segment at 74–120 (PAPQLSASHQHQAQQQQQQTKQPQQPYDPQQDQVPSTSTASSSKPAA) is disordered. Residues 76 to 120 (PQLSASHQHQAQQQQQQTKQPQQPYDPQQDQVPSTSTASSSKPAA) show a composition bias toward low complexity. The next 5 membrane-spanning stretches (helical) occupy residues 139-159 (PLIGYWLVQGHYEAATLALAV), 191-211 (VLIGCVAAALLMNGAMPGWVA), 251-271 (AAAAGAATGAANGVASGGGGG), 280-300 (PLLISKANTVLQLLLLGGYLL), and 321-341 (LIMGLELATAATTVASGLAYG).

This sequence belongs to the CDP-alcohol phosphatidyltransferase class-I family. It depends on Mn(2+) as a cofactor.

Its subcellular location is the mitochondrion inner membrane. The enzyme catalyses a CDP-1,2-diacyl-sn-glycerol + a 1,2-diacyl-sn-glycero-3-phospho-(1'-sn-glycerol) = a cardiolipin + CMP + H(+). Its function is as follows. Catalyzes the synthesis of cardiolipin (CL) (diphosphatidylglycerol) by specifically transferring a phosphatidyl group from CDP-diacylglycerol to phosphatidylglycerol (PG). CL is a key phospholipid in mitochondrial membranes and plays important roles in maintaining the functional integrity and dynamics of mitochondria under both optimal and stress conditions. Cannot catalyze the phosphatidyl group transfer from one PG molecule to another to form CL. This Chlamydomonas reinhardtii (Chlamydomonas smithii) protein is Cardiolipin synthase (CMP-forming).